The following is a 285-amino-acid chain: Tropomyosin alpha-3 chain (285 aa).

Positions 1-285 (MMEAIKKKMQ…DHALNDMTSI (285 aa)) form a coiled coil. Methionine 2 carries the N-acetylmethionine modification. Methionine 2 is modified (N-acetylalanine). Position 54 is a phosphothreonine (threonine 54). Serine 62 and serine 88 each carry phosphoserine. Threonine 109 bears the Phosphothreonine mark. Serine 207 and serine 216 each carry phosphoserine. N6-acetyllysine is present on isoleucine 228. Threonine 253 carries the phosphothreonine modification. Tyrosine 262 is subject to Phosphotyrosine. A Phosphoserine modification is found at serine 272. A Phosphothreonine modification is found at threonine 283. Phosphoserine is present on serine 284.

It belongs to the tropomyosin family. Homodimer. Heterodimer of an alpha (TPM1, TPM3 or TPM4) and a beta (TPM2) chain. Interacts with TMOD1. Interacts with TNNT1.

It is found in the cytoplasm. The protein resides in the cytoskeleton. Functionally, binds to actin filaments in muscle and non-muscle cells. Plays a central role, in association with the troponin complex, in the calcium dependent regulation of vertebrate striated muscle contraction. Smooth muscle contraction is regulated by interaction with caldesmon. In non-muscle cells is implicated in stabilizing cytoskeleton actin filaments. The chain is Tropomyosin alpha-3 chain (Tpm3) from Mus musculus (Mouse).